The primary structure comprises 402 residues: Bone morphogenetic protein 8A (402 aa).

Residues 1 to 19 (MAARPGPLWLLGLTLCALG) form the signal peptide. A propeptide spanning residues 20–263 (GGGPGLRPPP…ASPSPIRTPR (244 aa)) is cleaved from the precursor. N-linked (GlcNAc...) asparagine glycosylation is found at Asn-158 and Asn-343. 3 cysteine pairs are disulfide-bonded: Cys-301–Cys-367, Cys-330–Cys-399, and Cys-334–Cys-401.

The protein belongs to the TGF-beta family. Homodimer; disulfide-linked.

The protein resides in the secreted. Functionally, induces cartilage and bone formation. May be the osteoinductive factor responsible for the phenomenon of epithelial osteogenesis. Plays a role in calcium regulation and bone homeostasis. Signaling protein involved in regulation of thermogenesis and energy balance. Proposed to increase the peripheral response of brown adipose tissue (BAT) to adrenergic stimulation while acting centrally in the hypothalamus to increase sympathetic output to BAT. Growth factor of the TGF-beta superfamily that plays important role in various biological processes, including spermatogenesis, osteogenesis, steroidogenesis as well as regulation of energy balance. Initiates the canonical BMP signaling cascade by associating with type I receptor BMPR1A and type II receptor BMPR2. Once all three components are bound together in a complex at the cell surface, BMPR2 phosphorylates and activates BMPR1A. In turn, BMPR1A propagates signal by phosphorylating SMAD1/5/8 that travel to the nucleus and act as activators and repressors of transcription of target genes. In addition, activates the SMAD2/3 pathway. The sequence is that of Bone morphogenetic protein 8A (BMP8A) from Homo sapiens (Human).